Here is a 146-residue protein sequence, read N- to C-terminus: Protein disulfide-isomerase 5-1 (146 aa).

An N-terminal signal peptide occupies residues 1-25; the sequence is MTLGARLVAPMIILLLFIPIELVKA. One can recognise a Thioredoxin domain in the interval 26–133; sequence EVITLTPETF…LKAFVVEETE (108 aa). Catalysis depends on nucleophile residues Cys-55 and Cys-58. Cys-55 and Cys-58 form a disulfide bridge.

The protein belongs to the protein disulfide isomerase family.

Acts as a protein-folding catalyst that interacts with nascent polypeptides to catalyze the formation, isomerization, and reduction or oxidation of disulfide bonds. This chain is Protein disulfide-isomerase 5-1 (PDIL5-1), found in Arabidopsis thaliana (Mouse-ear cress).